Here is a 364-residue protein sequence, read N- to C-terminus: Chorismate synthase (364 aa).

Arg48 contributes to the NADP(+) binding site. Residues 131-133, 243-244, Gly288, 303-307, and Arg329 contribute to the FMN site; these read RSS, NA, and KPTSS.

It belongs to the chorismate synthase family. Homotetramer. Requires FMNH2 as cofactor.

It catalyses the reaction 5-O-(1-carboxyvinyl)-3-phosphoshikimate = chorismate + phosphate. Its pathway is metabolic intermediate biosynthesis; chorismate biosynthesis; chorismate from D-erythrose 4-phosphate and phosphoenolpyruvate: step 7/7. Its function is as follows. Catalyzes the anti-1,4-elimination of the C-3 phosphate and the C-6 proR hydrogen from 5-enolpyruvylshikimate-3-phosphate (EPSP) to yield chorismate, which is the branch point compound that serves as the starting substrate for the three terminal pathways of aromatic amino acid biosynthesis. This reaction introduces a second double bond into the aromatic ring system. This is Chorismate synthase from Brucella anthropi (strain ATCC 49188 / DSM 6882 / CCUG 24695 / JCM 21032 / LMG 3331 / NBRC 15819 / NCTC 12168 / Alc 37) (Ochrobactrum anthropi).